A 465-amino-acid chain; its full sequence is Glucose-1-phosphate adenylyltransferase (465 aa).

Residues glycine 164, 181–182 (EK), and serine 199 each bind alpha-D-glucose 1-phosphate.

The protein belongs to the bacterial/plant glucose-1-phosphate adenylyltransferase family. As to quaternary structure, homotetramer.

It catalyses the reaction alpha-D-glucose 1-phosphate + ATP + H(+) = ADP-alpha-D-glucose + diphosphate. It functions in the pathway glycan biosynthesis; glycogen biosynthesis. Functionally, involved in the biosynthesis of ADP-glucose, a building block required for the elongation reactions to produce glycogen. Catalyzes the reaction between ATP and alpha-D-glucose 1-phosphate (G1P) to produce pyrophosphate and ADP-Glc. This is Glucose-1-phosphate adenylyltransferase from Arthrobacter sp. (strain FB24).